Reading from the N-terminus, the 1311-residue chain is DENN domain-containing protein 5B (1311 aa).

Residues 53-270 (ATAAGENFDQ…EVPLPASGRS (218 aa)) form the uDENN domain. Residues 154-165 (QAEHNTSAQNCT) are compositionally biased toward polar residues. Positions 154-201 (QAEHNTSAQNCTSSSSSSSSSSSSSSMDSLSSSLDDVDSPSAHGGRRT) are disordered. Low complexity predominate over residues 166–187 (SSSSSSSSSSSSSSMDSLSSSL). The region spanning 289–452 (ELPLADFPLA…AVMSLQTSVL (164 aa)) is the cDENN domain. A dDENN domain is found at 454 to 619 (KELKSTSLRE…DNKIMSQWEE (166 aa)). In terms of domain architecture, RUN 1 spans 809 to 969 (LEENTLIASL…DYFCFTSVFT (161 aa)). Residues 854-874 (EQQLESPVSNGQERRKTESSV) form a disordered region. Residues 962 to 982 (FCFTSVFTTIMIPYRAVIIPI) form a helical membrane-spanning segment. The PLAT domain maps to 973–1081 (IPYRAVIIPI…DDGSLERVLI (109 aa)). The 152-residue stretch at 1155 to 1306 (TVLLCGEGGL…FPITLETSLT (152 aa)) folds into the RUN 2 domain.

Belongs to the RAB6IP1 family.

The protein resides in the membrane. Its function is as follows. Guanine nucleotide exchange factor (GEF) which may activate the small GTPases Rab. May promote the exchange of GDP to GTP, converting inactive GDP-bound Rab proteins into their active GTP-bound form. In Danio rerio (Zebrafish), this protein is DENN domain-containing protein 5B (dennd5b).